The sequence spans 544 residues: Chaperonin GroEL 2 (544 aa).

ATP contacts are provided by residues 29–32 (TLGP), 86–90 (DGTTT), Gly-413, 479–481 (NAA), and Asp-495.

It belongs to the chaperonin (HSP60) family. In terms of assembly, forms a cylinder of 14 subunits composed of two heptameric rings stacked back-to-back. Interacts with the co-chaperonin GroES.

Its subcellular location is the cytoplasm. It carries out the reaction ATP + H2O + a folded polypeptide = ADP + phosphate + an unfolded polypeptide.. Its function is as follows. Together with its co-chaperonin GroES, plays an essential role in assisting protein folding. The GroEL-GroES system forms a nano-cage that allows encapsulation of the non-native substrate proteins and provides a physical environment optimized to promote and accelerate protein folding. This Prochlorococcus marinus subsp. pastoris (strain CCMP1986 / NIES-2087 / MED4) protein is Chaperonin GroEL 2.